Consider the following 356-residue polypeptide: sn-glycerol-3-phosphate import ATP-binding protein UgpC (356 aa).

One can recognise an ABC transporter domain in the interval 4–235 (LKLQAVTKSW…PASLFVASFI (232 aa)). 37–44 (GPSGCGKS) is an ATP binding site.

The protein belongs to the ABC transporter superfamily. sn-glycerol-3-phosphate importer (TC 3.A.1.1.3) family. As to quaternary structure, the complex is composed of two ATP-binding proteins (UgpC), two transmembrane proteins (UgpA and UgpE) and a solute-binding protein (UgpB).

It is found in the cell inner membrane. It catalyses the reaction sn-glycerol 3-phosphate(out) + ATP + H2O = sn-glycerol 3-phosphate(in) + ADP + phosphate + H(+). In terms of biological role, part of the ABC transporter complex UgpBAEC involved in sn-glycerol-3-phosphate (G3P) import. Responsible for energy coupling to the transport system. This is sn-glycerol-3-phosphate import ATP-binding protein UgpC from Escherichia coli O6:K15:H31 (strain 536 / UPEC).